Reading from the N-terminus, the 448-residue chain is 26S proteasome regulatory subunit 4 homolog (448 aa).

Gly residues predominate over residues 1 to 16 (MGQGTPGGMGKQGGAP). 2 disordered regions span residues 1–56 (MGQG…AAAR) and 93–112 (LRPTEDKTEEDRSKVDDLRG). 2 stretches are compositionally biased toward basic and acidic residues: residues 17–33 (GDRKPGGDGDKKDRKFE) and 93–111 (LRPTEDKTEEDRSKVDDLR). An ATP-binding site is contributed by 234–241 (GEPGTGKT).

It belongs to the AAA ATPase family.

Its subcellular location is the cytoplasm. The protein resides in the nucleus. The 26S proteasome is involved in the ATP-dependent degradation of ubiquitinated proteins. The regulatory (or ATPase) complex confers ATP dependency and substrate specificity to the 26S complex. In Oryza sativa subsp. japonica (Rice), this protein is 26S proteasome regulatory subunit 4 homolog (TBP2).